A 553-amino-acid polypeptide reads, in one-letter code: Putative transport protein ASA_0825 (553 aa).

Transmembrane regions (helical) follow at residues 4-24 (IALSISMLSLVAVLGLWLGNW), 29-49 (VGLGIGGVLFGGIIVGHFAGV), 65-85 (FGLILFVYTIGIQVGPGFFSS), 95-115 (GFAALLVILGCVVAAGLHQLF), and 158-178 (MGYAVAYPFGICGILLTMWLV). 2 consecutive RCK C-terminal domains span residues 191-276 (DLFE…VLGE) and 279-361 (ETSL…VVGN). The next 6 membrane-spanning stretches (helical) occupy residues 371–391 (MLPVFIGIGLGVLLGSIPFYL), 403–425 (AGGPLVVALILSRIGSIGKLYWF), 439–459 (IVLFLAVVGFKSGAGFVDTLI), 465–485 (AWMMYGMAITLIPLLVVGVLA), 493–513 (YLTLCGLLAGSMTDPPALAFA), and 533–553 (LVMFLRIISPQLLAILLWAGV).

It belongs to the AAE transporter (TC 2.A.81) family. YidE subfamily.

It is found in the cell membrane. The sequence is that of Putative transport protein ASA_0825 from Aeromonas salmonicida (strain A449).